Reading from the N-terminus, the 411-residue chain is AT-hook motif nuclear-localized protein 14 (411 aa).

Disordered stretches follow at residues 1–32 (MDPN…QRLT), 54–164 (ASTG…LGSV), 289–348 (KDAA…HQAG), and 366–411 (THSR…QIPD). The segment covering 7 to 19 (HHHHQQQQLHHLH) has biased composition (basic residues). Residues 20–29 (QQQQQQQQQQ) show a composition bias toward low complexity. Polar residues predominate over residues 54 to 66 (ASTGNAVPSSNNG). Positions 105–113 (KRKRGRPRK) match the Bipartite nuclear localization signal motif. The a.T hook DNA-binding region spans 105–117 (KRKRGRPRKYVTP). Low complexity-rich tracts occupy residues 120–135 (ALAA…SSSA) and 144–159 (VTGG…SKKS). A PPC domain is found at 165–305 (GKTGQCFTPH…GKGDASNSGS (141 aa)). Residues 306 to 315 (RLTSPVSSGQ) are compositionally biased toward polar residues. A compositionally biased stretch (gly residues) spans 374–390 (RGGGNSGHDGRGGGGYD).

The protein localises to the nucleus. In terms of biological role, transcription factor that specifically binds AT-rich DNA sequences related to the nuclear matrix attachment regions (MARs). This chain is AT-hook motif nuclear-localized protein 14, found in Arabidopsis thaliana (Mouse-ear cress).